The following is a 2067-amino-acid chain: Non-reducing polyketide synthase PKS12 (2067 aa).

Positions 4-241 (FVFGDQSTRF…LPVPIYAPYH (238 aa)) are N-terminal acylcarrier protein transacylase (SAT) domain. The tract at residues 350 to 373 (NSMGPKASTSHSSAETQTESSSKN) is disordered. Over residues 356–373 (ASTSHSSAETQTESSSKN) the composition is skewed to polar residues. One can recognise a Ketosynthase family 3 (KS3) domain in the interval 373–808 (NSKIAIVAMS…GGNSAVLLQD (436 aa)). Catalysis depends on for beta-ketoacyl synthase activity residues Cys545, His680, and His725. The malonyl-CoA:ACP transacylase (MAT) domain stretch occupies residues 912–1199 (FVFSGQGAQY…VVCSTFLKSS (288 aa)). Residue Ser1001 is the For acyl/malonyl transferase activity of the active site. Residues 1297-1433 (QKILQETSLD…CELRLEHPSQ (137 aa)) are N-terminal hotdog fold. In terms of domain architecture, PKS/mFAS DH spans 1297 to 1606 (QKILQETSLD…FQGLPRRVLN (310 aa)). His1329 (proton acceptor; for dehydratase activity) is an active-site residue. A product template (PT) domain region spans residues 1329-1604 (HRVNGVKVCT…ITFQGLPRRV (276 aa)). Residues 1460–1606 (LDSMLATGMV…FQGLPRRVLN (147 aa)) are C-terminal hotdog fold. The Proton donor; for dehydratase activity role is filled by Asp1519. Positions 1619 to 1648 (APMGRRDVPPSRMDVPPVRSGEGPPTSAPT) are disordered. The region spanning 1660–1738 (TSMDSRLRPL…SFKLFLGLVD (79 aa)) is the Carrier domain. Ser1698 bears the O-(pantetheine 4'-phosphoryl)serine mark. A disordered region spans residues 1742–1779 (KSSSGSDGSGRSSPAPGIESGATTPPMSEEDQDKIVSS). Residues 1743-1754 (SSSGSDGSGRSS) show a composition bias toward low complexity. A claisen cyclase domain region spans residues 1781-2065 (SLHQFQASST…YVSAFLARAL (285 aa)). Ser1875 acts as the For Claisen cyclase activity in catalysis.

It catalyses the reaction 6 malonyl-CoA + acetyl-CoA + 6 H(+) = naphtopyrone YWA1 + 6 CO2 + 7 CoA + H2O. It functions in the pathway pigment biosynthesis. Functionally, non-reducing polyketide synthase; part of the gene cluster that mediates the biosynthesis of aurofusarin, a red mycelium pigment which is acting as a mycotoxin. The first step is performed by the polyketide synthase which condenses one acetyl-CoA and 6 malonyl-CoA units to form the first intermediate, the cyclic heptaketide and yellow pigment YWA1. The C2 hydroxyl group in the pyrone ring of YWA1 is probably formed during ring closure by an aldol-type cyclization reaction. The dehydratase aurZ then acts as the first tailoring enzyme in the aurofusarin biosynthetic pathway by converting YWA1 to nor-rubrofusarin. Nor-rubrofusarin is then methylated to rubrofusarin by the O-methyltransferase aurJ. Rubrofusarin is then transported across the plasma membrane by the rubrofusarin-specific pump aurT for further enzymatic processing by the extracellular complex composed of GIP1, aurF, aurO and aurS to yield aurofusarin. The polypeptide is Non-reducing polyketide synthase PKS12 (Gibberella zeae (strain ATCC MYA-4620 / CBS 123657 / FGSC 9075 / NRRL 31084 / PH-1) (Wheat head blight fungus)).